A 387-amino-acid polypeptide reads, in one-letter code: 1,3-propanediol dehydrogenase (387 aa).

Belongs to the iron-containing alcohol dehydrogenase family. Homooctamer. The cofactor is Fe cation.

It carries out the reaction propane-1,3-diol + NAD(+) = 3-hydroxypropanal + NADH + H(+). This is 1,3-propanediol dehydrogenase (dhaT) from Klebsiella pneumoniae.